Reading from the N-terminus, the 22-residue chain is Mu-conotoxin GIIIB (22 aa).

Cystine bridges form between Cys3/Cys15, Cys4/Cys20, and Cys10/Cys21. Pro6 and Pro7 each carry 4-hydroxyproline; partial. Pro17 is subject to 4-hydroxyproline. Ala22 bears the Alanine amide mark.

The protein belongs to the conotoxin M superfamily. Expressed by the venom duct.

Its subcellular location is the secreted. Functionally, mu-conotoxins block voltage-gated sodium channels (Nav). The protein is Mu-conotoxin GIIIB of Conus geographus (Geography cone).